Here is a 151-residue protein sequence, read N- to C-terminus: Putative pre-16S rRNA nuclease (151 aa).

It belongs to the YqgF nuclease family.

The protein localises to the cytoplasm. In terms of biological role, could be a nuclease involved in processing of the 5'-end of pre-16S rRNA. This is Putative pre-16S rRNA nuclease from Onion yellows phytoplasma (strain OY-M).